The chain runs to 302 residues: Sulfate adenylyltransferase subunit 2 (302 aa).

Belongs to the PAPS reductase family. CysD subfamily. Heterodimer composed of CysD, the smaller subunit, and CysN.

It catalyses the reaction sulfate + ATP + H(+) = adenosine 5'-phosphosulfate + diphosphate. The protein operates within sulfur metabolism; hydrogen sulfide biosynthesis; sulfite from sulfate: step 1/3. In terms of biological role, with CysN forms the ATP sulfurylase (ATPS) that catalyzes the adenylation of sulfate producing adenosine 5'-phosphosulfate (APS) and diphosphate, the first enzymatic step in sulfur assimilation pathway. APS synthesis involves the formation of a high-energy phosphoric-sulfuric acid anhydride bond driven by GTP hydrolysis by CysN coupled to ATP hydrolysis by CysD. The chain is Sulfate adenylyltransferase subunit 2 from Escherichia coli O9:H4 (strain HS).